A 115-amino-acid polypeptide reads, in one-letter code: Large ribosomal subunit protein uL24 (115 aa).

It belongs to the universal ribosomal protein uL24 family. Part of the 50S ribosomal subunit.

Its function is as follows. One of two assembly initiator proteins, it binds directly to the 5'-end of the 23S rRNA, where it nucleates assembly of the 50S subunit. Functionally, one of the proteins that surrounds the polypeptide exit tunnel on the outside of the subunit. The polypeptide is Large ribosomal subunit protein uL24 (Deinococcus deserti (strain DSM 17065 / CIP 109153 / LMG 22923 / VCD115)).